A 471-amino-acid polypeptide reads, in one-letter code: Tryptophanase (471 aa).

N6-acetyllysine occurs at positions 5, 115, and 156. N6-(pyridoxal phosphate)lysine is present on lysine 270. N6-acetyllysine is present on lysine 450.

This sequence belongs to the beta-eliminating lyase family. As to quaternary structure, homotetramer. Pyridoxal 5'-phosphate is required as a cofactor.

It carries out the reaction L-tryptophan + H2O = indole + pyruvate + NH4(+). It participates in amino-acid degradation; L-tryptophan degradation via pyruvate pathway; indole and pyruvate from L-tryptophan: step 1/1. The protein is Tryptophanase of Escherichia coli O6:H1 (strain CFT073 / ATCC 700928 / UPEC).